The primary structure comprises 137 residues: Cofilin-1A (137 aa).

One can recognise an ADF-H domain in the interval 2-135 (SSGIALAPNC…KDSCFYEKCT (134 aa)).

It belongs to the actin-binding proteins ADF family.

It localises to the nucleus matrix. Its subcellular location is the cytoplasm. The protein localises to the cytoskeleton. In terms of biological role, controls reversibly actin polymerization and depolymerization in a pH-sensitive manner. It has the ability to bind G- and F-actin in a 1:1 ratio of cofilin to actin. It is the major component of intranuclear and cytoplasmic actin rods. The chain is Cofilin-1A (cofA) from Dictyostelium discoideum (Social amoeba).